Reading from the N-terminus, the 298-residue chain is Homoserine kinase (298 aa).

Position 83 to 93 (83 to 93) interacts with ATP; sequence PISRGLGSSSS.

The protein belongs to the GHMP kinase family. Homoserine kinase subfamily.

It localises to the cytoplasm. The enzyme catalyses L-homoserine + ATP = O-phospho-L-homoserine + ADP + H(+). It functions in the pathway amino-acid biosynthesis; L-threonine biosynthesis; L-threonine from L-aspartate: step 4/5. Functionally, catalyzes the ATP-dependent phosphorylation of L-homoserine to L-homoserine phosphate. The sequence is that of Homoserine kinase from Clostridium botulinum (strain Eklund 17B / Type B).